The primary structure comprises 511 residues: Maturase K (511 aa).

The protein belongs to the intron maturase 2 family. MatK subfamily.

It is found in the plastid. The protein resides in the chloroplast. Usually encoded in the trnK tRNA gene intron. Probably assists in splicing its own and other chloroplast group II introns. The protein is Maturase K of Phleum pratense (Common timothy).